The primary structure comprises 197 residues: Adenylyl-sulfate kinase (197 aa).

33-40 (GLSGSGKS) is an ATP binding site. The active-site Phosphoserine intermediate is the Ser-107.

The protein belongs to the APS kinase family.

It catalyses the reaction adenosine 5'-phosphosulfate + ATP = 3'-phosphoadenylyl sulfate + ADP + H(+). It functions in the pathway sulfur metabolism; hydrogen sulfide biosynthesis; sulfite from sulfate: step 2/3. Its function is as follows. Catalyzes the synthesis of activated sulfate. The protein is Adenylyl-sulfate kinase of Bacillus pumilus (strain SAFR-032).